The following is a 584-amino-acid chain: Aspartate--tRNA(Asp/Asn) ligase (584 aa).

Glu177 serves as a coordination point for L-aspartate. The segment at 201-204 (QLFK) is aspartate. Residue Arg223 participates in L-aspartate binding. Residues 223 to 225 (RDE) and Gln232 contribute to the ATP site. Position 447 (His447) interacts with L-aspartate. Glu481 serves as a coordination point for ATP. Residue Arg488 coordinates L-aspartate. 533-536 (GLDR) serves as a coordination point for ATP.

It belongs to the class-II aminoacyl-tRNA synthetase family. Type 1 subfamily. Homodimer.

It is found in the cytoplasm. The catalysed reaction is tRNA(Asx) + L-aspartate + ATP = L-aspartyl-tRNA(Asx) + AMP + diphosphate. Its function is as follows. Aspartyl-tRNA synthetase with relaxed tRNA specificity since it is able to aspartylate not only its cognate tRNA(Asp) but also tRNA(Asn). Reaction proceeds in two steps: L-aspartate is first activated by ATP to form Asp-AMP and then transferred to the acceptor end of tRNA(Asp/Asn). The chain is Aspartate--tRNA(Asp/Asn) ligase from Chlamydia pneumoniae (Chlamydophila pneumoniae).